We begin with the raw amino-acid sequence, 448 residues long: Homogentisate 1,2-dioxygenase (448 aa).

Residue His303 is the Proton acceptor of the active site. 2 residues coordinate Fe cation: His346 and Glu352. Homogentisate is bound by residues Tyr361 and His382. Residue His382 coordinates Fe cation.

The protein belongs to the homogentisate dioxygenase family. In terms of assembly, hexamer; dimer of trimers. Requires Fe cation as cofactor.

It carries out the reaction homogentisate + O2 = 4-maleylacetoacetate + H(+). It functions in the pathway amino-acid degradation; L-phenylalanine degradation; acetoacetate and fumarate from L-phenylalanine: step 4/6. In terms of biological role, involved in the catabolism of homogentisate (2,5-dihydroxyphenylacetate or 2,5-OH-PhAc), a central intermediate in the degradation of phenylalanine and tyrosine. Catalyzes the oxidative ring cleavage of the aromatic ring of homogentisate to yield maleylacetoacetate. This Rhodopseudomonas palustris (strain ATCC BAA-98 / CGA009) protein is Homogentisate 1,2-dioxygenase.